The primary structure comprises 240 residues: Sugar fermentation stimulation protein homolog (240 aa).

This sequence belongs to the SfsA family.

The chain is Sugar fermentation stimulation protein homolog from Crocosphaera subtropica (strain ATCC 51142 / BH68) (Cyanothece sp. (strain ATCC 51142)).